A 91-amino-acid polypeptide reads, in one-letter code: Small ribosomal subunit protein uS19 (91 aa).

Belongs to the universal ribosomal protein uS19 family.

Functionally, protein S19 forms a complex with S13 that binds strongly to the 16S ribosomal RNA. The chain is Small ribosomal subunit protein uS19 from Delftia acidovorans (strain DSM 14801 / SPH-1).